Reading from the N-terminus, the 210-residue chain is Urease accessory protein UreE (210 aa).

Residues 144–210 (PEGGAYAAGG…GHAHPHSLAR (67 aa)) form a disordered region. Basic and acidic residues predominate over residues 156 to 202 (HGHDHPHHDHGHDHAHAHAHGTEACDHEHSHDHDCGHHHDHGQDYGH).

This sequence belongs to the UreE family.

The protein localises to the cytoplasm. Its function is as follows. Involved in urease metallocenter assembly. Binds nickel. Probably functions as a nickel donor during metallocenter assembly. In Paracidovorax citrulli (strain AAC00-1) (Acidovorax citrulli), this protein is Urease accessory protein UreE.